Reading from the N-terminus, the 188-residue chain is MAIRRILRIDDAEDRKILKMQCRPVKLPDRNLKQLVADMFETMHAANGVGLAAPQIGIPIQLCIIEIPPEYEEQPDGSLIEVNPAEPYVLINPRIVKTSGEEIMRDEGCLSLPGWYGMVPRQTWVTVEFQDLSGKHHRLRRADGLLGWAIQHEVDHLHGILFTERIRDLSTLRDITKEREAQPVEAKA.

Fe cation is bound by residues Cys-109 and His-152. The active site involves Glu-153. Position 156 (His-156) interacts with Fe cation.

The protein belongs to the polypeptide deformylase family. Fe(2+) serves as cofactor.

It carries out the reaction N-terminal N-formyl-L-methionyl-[peptide] + H2O = N-terminal L-methionyl-[peptide] + formate. Its function is as follows. Removes the formyl group from the N-terminal Met of newly synthesized proteins. Requires at least a dipeptide for an efficient rate of reaction. N-terminal L-methionine is a prerequisite for activity but the enzyme has broad specificity at other positions. The protein is Peptide deformylase of Chloroflexus aggregans (strain MD-66 / DSM 9485).